A 401-amino-acid polypeptide reads, in one-letter code: MSLPSPWRADFPAFSAFAAEGLTYLDSAATAQKPQAVLDALNGYYLGGAANVHRAQHVPGERATRAFEAARSRVAHWLHAGNPAEVLFTRGTTEAINLVAYGLERHFRPGDELLVSALEHHANLLPWQQLALRRGLVLRVLPLDERGVIDLEQARHIIGERTRLLAISQLSNVLGTWQPVVELIQLARERGAWTLVDGAQGSVHGRHDLPGLGCDFYAFSGHKLYGPDGIGVLWGRPQALEQLAHWQFGGEMVRHTGFHEASFHAAPLGFEAGTPAVSAAIGLGATIDWLATLDEAEVAAHEGALHARLLAGLLARDGVSLLGEPQAALASFCVDGVHVADLAHLLGEQGIAVRAGHHCAMPLLQRLEVPGALRVSLGLYNDADDLERFFLALDRSLELLR.

Lys223 bears the N6-(pyridoxal phosphate)lysine mark.

This sequence belongs to the class-V pyridoxal-phosphate-dependent aminotransferase family. Csd subfamily. Requires pyridoxal 5'-phosphate as cofactor.

It catalyses the reaction (sulfur carrier)-H + L-cysteine = (sulfur carrier)-SH + L-alanine. In terms of biological role, catalyzes the removal of elemental sulfur and selenium atoms from L-cysteine, L-cystine, L-selenocysteine, and L-selenocystine to produce L-alanine. The chain is Probable cysteine desulfurase (csd) from Pseudomonas aeruginosa (strain ATCC 15692 / DSM 22644 / CIP 104116 / JCM 14847 / LMG 12228 / 1C / PRS 101 / PAO1).